The chain runs to 534 residues: Serine protease vicPb (534 aa).

Residues 1–17 (MLRYLLIPILYLQVVLG) form the signal peptide. N-linked (GlcNAc...) asparagine glycans are attached at residues N34, N65, and N126. S174 (charge relay system) is an active-site residue. N-linked (GlcNAc...) asparagine glycans are attached at residues N297, N335, N352, N415, and N437. D451 serves as the catalytic Charge relay system.

Belongs to the peptidase S28 family.

Its pathway is mycotoxin biosynthesis. Its function is as follows. Serine protease, part of the gene cluster that mediates the biosynthesis of the secondary metabolite victorin, the molecular basis for Victoria blight of oats. Within the pathway, vicPa and vicPb are probably involved in the processing of the vicA1 and vicA2 precursors. The pathway starts with the processing of the precursor vicA1 by several endopeptidases including kexin proteases as well as the cluster-specific S28 family peptidases vicPa and vicPb to produce 7 identical copies of the hexapeptide Gly-Leu-Lys-Leu-Ala-Phe. After being excised from the precursor peptide, the core peptides are cyclized and modified post-translationally by enzymes encoded within the gene cluster. The ustYa family oxidase vicYb is required for the formation of the macrocycle in victorin and the copper amine oxidases (CAOs) vicK1 and vicK2 are responsible for converting victorin to the active form by oxidizing the N-terminal glycyl residue in the peptides to glyoxylate. Relaxed substrate specificity of enzymes in the victorin biosynthetic pathway results in a metabolic grid that produces a set of analogs including victorinines B, C, E or HV-toxin M. The protein is Serine protease vicPb of Bipolaris victoriae (strain FI3) (Victoria blight of oats agent).